Reading from the N-terminus, the 940-residue chain is UvrABC system protein A (940 aa).

ATP is bound at residue 31–38 (GLSGSGKS). The segment at 253-280 (CPICGYSMRELEPRLFSFNNPAGACPTC) adopts a C4-type zinc-finger fold. ABC transporter domains follow at residues 310 to 587 (WDRR…PESL) and 607 to 937 (ANPE…RFLK). 640–647 (GVSGSGKS) is a binding site for ATP. The C4-type zinc finger occupies 740-766 (CEACQGDGVIKVEMHFLPDIYVPCDQC).

The protein belongs to the ABC transporter superfamily. UvrA family. Forms a heterotetramer with UvrB during the search for lesions. Interacts with TRCF (Mfd). UvrB and TRCF binding to UvrA could be mutually exclusive.

It localises to the cytoplasm. The UvrABC repair system catalyzes the recognition and processing of DNA lesions. UvrA is an ATPase and a DNA-binding protein. A damage recognition complex composed of 2 UvrA and 2 UvrB subunits scans DNA for abnormalities. When the presence of a lesion has been verified by UvrB, the UvrA molecules dissociate. In Escherichia coli (strain K12), this protein is UvrABC system protein A.